The chain runs to 187 residues: Ribosome maturation factor RimM (187 aa).

Residues 95 to 178 enclose the PRC barrel domain; that stretch reads DEDEFFYADL…GLVEDKDESL (84 aa).

This sequence belongs to the RimM family. Binds ribosomal protein uS19.

Its subcellular location is the cytoplasm. In terms of biological role, an accessory protein needed during the final step in the assembly of 30S ribosomal subunit, possibly for assembly of the head region. Essential for efficient processing of 16S rRNA. May be needed both before and after RbfA during the maturation of 16S rRNA. It has affinity for free ribosomal 30S subunits but not for 70S ribosomes. The chain is Ribosome maturation factor RimM from Sinorhizobium fredii (strain NBRC 101917 / NGR234).